A 193-amino-acid polypeptide reads, in one-letter code: 3-isopropylmalate dehydratase small subunit (193 aa).

The protein belongs to the LeuD family. LeuD type 1 subfamily. In terms of assembly, heterodimer of LeuC and LeuD.

The enzyme catalyses (2R,3S)-3-isopropylmalate = (2S)-2-isopropylmalate. Its pathway is amino-acid biosynthesis; L-leucine biosynthesis; L-leucine from 3-methyl-2-oxobutanoate: step 2/4. Functionally, catalyzes the isomerization between 2-isopropylmalate and 3-isopropylmalate, via the formation of 2-isopropylmaleate. In Listeria innocua serovar 6a (strain ATCC BAA-680 / CLIP 11262), this protein is 3-isopropylmalate dehydratase small subunit.